A 99-amino-acid polypeptide reads, in one-letter code: MAAAAAIRGVRGKLGLREIRIHLCQRSPGSQGVRDFIEKRYVELKKANPDLPILIRECSDVQPKLWARYAFGQEKNVSLNNFSADQVTRALENVLSSKA.

At alanine 2 the chain carries N-acetylalanine. Cysteines 24 and 58 form a disulfide. At lysine 64 the chain carries N6-acetyllysine; alternate. Position 64 is an N6-succinyllysine; alternate (lysine 64). Lysine 75 carries the N6-acetyllysine modification.

Belongs to the complex I NDUFA2 subunit family. Complex I is composed of 45 different subunits.

The protein localises to the mitochondrion inner membrane. Accessory subunit of the mitochondrial membrane respiratory chain NADH dehydrogenase (Complex I), that is believed not to be involved in catalysis. Complex I functions in the transfer of electrons from NADH to the respiratory chain. The immediate electron acceptor for the enzyme is believed to be ubiquinone. The sequence is that of NADH dehydrogenase [ubiquinone] 1 alpha subcomplex subunit 2 (NDUFA2) from Bos taurus (Bovine).